The following is a 486-amino-acid chain: Aspartyl/glutamyl-tRNA(Asn/Gln) amidotransferase subunit B (486 aa).

This sequence belongs to the GatB/GatE family. GatB subfamily. Heterotrimer of A, B and C subunits.

It carries out the reaction L-glutamyl-tRNA(Gln) + L-glutamine + ATP + H2O = L-glutaminyl-tRNA(Gln) + L-glutamate + ADP + phosphate + H(+). The catalysed reaction is L-aspartyl-tRNA(Asn) + L-glutamine + ATP + H2O = L-asparaginyl-tRNA(Asn) + L-glutamate + ADP + phosphate + 2 H(+). Functionally, allows the formation of correctly charged Asn-tRNA(Asn) or Gln-tRNA(Gln) through the transamidation of misacylated Asp-tRNA(Asn) or Glu-tRNA(Gln) in organisms which lack either or both of asparaginyl-tRNA or glutaminyl-tRNA synthetases. The reaction takes place in the presence of glutamine and ATP through an activated phospho-Asp-tRNA(Asn) or phospho-Glu-tRNA(Gln). The protein is Aspartyl/glutamyl-tRNA(Asn/Gln) amidotransferase subunit B of Leptospira interrogans serogroup Icterohaemorrhagiae serovar Lai (strain 56601).